Reading from the N-terminus, the 205-residue chain is Small ribosomal subunit protein uS4 (205 aa).

Residues 21-47 (GRPKSPFNKRDYGPGQHGQGRKGKPSD) form a disordered region. In terms of domain architecture, S4 RNA-binding spans 94-154 (RRLDSVVYRA…DKSKQLAIID (61 aa)).

This sequence belongs to the universal ribosomal protein uS4 family. In terms of assembly, part of the 30S ribosomal subunit. Contacts protein S5. The interaction surface between S4 and S5 is involved in control of translational fidelity.

One of the primary rRNA binding proteins, it binds directly to 16S rRNA where it nucleates assembly of the body of the 30S subunit. Functionally, with S5 and S12 plays an important role in translational accuracy. The polypeptide is Small ribosomal subunit protein uS4 (Pelagibacter ubique (strain HTCC1062)).